We begin with the raw amino-acid sequence, 386 residues long: Probable copper-dependent oxygenase M1 (386 aa).

A signal peptide spans 1 to 22 (MLRMKKICTAFLTIALCTHVLA). Asn86 is a glycosylation site (N-linked (GlcNAc...) asparagine). Residues 334–354 (FVVPIAAIAFIALTIGAGYVF) traverse the membrane as a helical segment.

The protein belongs to the clz3 oxygenase family.

It localises to the membrane. It participates in secondary metabolite biosynthesis. In terms of biological role, probable copper-dependent oxygenase; part of the gene cluster that mediates the biosynthesis of squalestatin S1 (SQS1, also known as zaragozic acid A), a heavily oxidized fungal polyketide that offers potent cholesterol lowering activity by targeting squalene synthase (SS). SQS1 is composed of a 2,8-dioxobicyclic[3.2.1]octane-3,4,5-tricarboxyclic acid core that is connected to two lipophilic polyketide arms. These initial steps feature the priming of an unusual benzoic acid starter unit onto the highly reducing polyketide synthase pks2, followed by oxaloacetate extension and product release to generate a tricarboxylic acid containing product. The phenylalanine ammonia lyase (PAL) M7 and the acyl-CoA ligase M9 are involved in transforming phenylalanine into benzoyl-CoA. The citrate synthase-like protein R3 is involved in connecting the C-alpha-carbons of the hexaketide chain and oxaloacetate to afford the tricarboxylic acid unit. The potential hydrolytic enzymes, M8 and M10, are in close proximity to pks2 and may participate in product release. On the other side, the tetraketide arm is synthesized by a the squalestatin tetraketide synthase pks1 and enzymatically esterified to the core in the last biosynthetic step, by the acetyltransferase M4. The biosynthesis of the tetraketide must involve 3 rounds of chain extension. After the first and second rounds methyl-transfer occurs, and in all rounds of extension the ketoreductase and dehydratase are active. The enoyl reductase and C-MeT of pks1 are not active in the final round of extension. The acetyltransferase M4 appears to have a broad substrate selectivity for its acyl CoA substrate, allowing the in vitro synthesis of novel squalestatins. The biosynthesis of SQS1 requires several oxidative steps likely performed by oxidoreductases M1, R1 and R2. Finally, in support of the identification of the cluster as being responsible for SQS1 production, the cluster contains a gene encoding a putative squalene synthase (SS) R6, suggesting a likely mechanism for self-resistance. This chain is Probable copper-dependent oxygenase M1, found in Phoma sp. (strain ATCC 20986 / MF5453).